A 353-amino-acid polypeptide reads, in one-letter code: Photosystem II D2 protein (353 aa).

Residue Thr-2 is modified to N-acetylthreonine. A Phosphothreonine modification is found at Thr-2. A helical transmembrane segment spans residues 41-61; the sequence is CAYFAIGGWFTGTTFVTSWYT. Residue His-118 coordinates chlorophyll a. A helical transmembrane segment spans residues 125–141; the sequence is GFMLRQFELARSVQLRP. 2 residues coordinate pheophytin a: Gln-130 and Asn-143. Residues 153 to 166 form a helical membrane-spanning segment; that stretch reads VFVSVFLIYPLGQS. His-198 contacts chlorophyll a. Residues 208–228 traverse the membrane as a helical segment; that stretch reads AALLCAIHGATVENTLFEDGD. Residues His-215 and Phe-262 each coordinate a plastoquinone. Position 215 (His-215) interacts with Fe cation. His-269 provides a ligand contact to Fe cation. A helical membrane pass occupies residues 279-295; that stretch reads GLWMSALGVVGLALNLR.

The protein belongs to the reaction center PufL/M/PsbA/D family. In terms of assembly, PSII is composed of 1 copy each of membrane proteins PsbA, PsbB, PsbC, PsbD, PsbE, PsbF, PsbH, PsbI, PsbJ, PsbK, PsbL, PsbM, PsbT, PsbX, PsbY, PsbZ, Psb30/Ycf12, at least 3 peripheral proteins of the oxygen-evolving complex and a large number of cofactors. It forms dimeric complexes. Requires The D1/D2 heterodimer binds P680, chlorophylls that are the primary electron donor of PSII, and subsequent electron acceptors. It shares a non-heme iron and each subunit binds pheophytin, quinone, additional chlorophylls, carotenoids and lipids. There is also a Cl(-1) ion associated with D1 and D2, which is required for oxygen evolution. The PSII complex binds additional chlorophylls, carotenoids and specific lipids. as cofactor.

Its subcellular location is the plastid. The protein localises to the chloroplast thylakoid membrane. It carries out the reaction 2 a plastoquinone + 4 hnu + 2 H2O = 2 a plastoquinol + O2. Its function is as follows. Photosystem II (PSII) is a light-driven water:plastoquinone oxidoreductase that uses light energy to abstract electrons from H(2)O, generating O(2) and a proton gradient subsequently used for ATP formation. It consists of a core antenna complex that captures photons, and an electron transfer chain that converts photonic excitation into a charge separation. The D1/D2 (PsbA/PsbD) reaction center heterodimer binds P680, the primary electron donor of PSII as well as several subsequent electron acceptors. D2 is needed for assembly of a stable PSII complex. The protein is Photosystem II D2 protein of Carica papaya (Papaya).